A 310-amino-acid chain; its full sequence is Ribosomal RNA small subunit methyltransferase H (310 aa).

Residues glycine 35–histidine 37, aspartate 52, phenylalanine 79, aspartate 100, and glutamine 107 contribute to the S-adenosyl-L-methionine site.

It belongs to the methyltransferase superfamily. RsmH family.

Its subcellular location is the cytoplasm. The catalysed reaction is cytidine(1402) in 16S rRNA + S-adenosyl-L-methionine = N(4)-methylcytidine(1402) in 16S rRNA + S-adenosyl-L-homocysteine + H(+). In terms of biological role, specifically methylates the N4 position of cytidine in position 1402 (C1402) of 16S rRNA. The protein is Ribosomal RNA small subunit methyltransferase H of Anaeromyxobacter sp. (strain K).